The chain runs to 542 residues: Exopolysaccharide phosphotransferase CpsY (542 aa).

Residues 522–542 (SPTVSAPLEDGQTANPAQTAR) are disordered. The span at 533–542 (QTANPAQTAR) shows a compositional bias: polar residues.

The protein belongs to the stealth family.

The sequence is that of Exopolysaccharide phosphotransferase CpsY (cpsY) from Mycobacterium leprae (strain TN).